Consider the following 150-residue polypeptide: Allograft inflammatory factor 1-like (150 aa).

The residue at position 2 (S2) is an N-acetylserine. S2 carries the post-translational modification Phosphoserine. The EF-hand 1 domain maps to 47-82 (EKLTAFKEKYMEFDLNNEGEIDLMSLKRMMEKLGVP). Positions 60, 62, 64, and 66 each coordinate Ca(2+). An EF-hand 2; degenerate domain is found at 83-117 (KTHLEMKKMISEVTGGVSDTISYRDFVNMMLGKRS). Residues 129 to 150 (KANESSPKPVGPPPERDIASLP) are disordered. S134 carries the post-translational modification Phosphoserine.

In terms of assembly, homodimer (Potential). Monomer.

It is found in the cytoplasm. The protein resides in the cytoskeleton. Its subcellular location is the cell projection. It localises to the ruffle membrane. Actin-binding protein that promotes actin bundling. May neither bind calcium nor depend on calcium for function. The protein is Allograft inflammatory factor 1-like (AIF1L) of Homo sapiens (Human).